The primary structure comprises 124 residues: Fluoride-specific ion channel FluC (124 aa).

A run of 4 helical transmembrane segments spans residues 1 to 21, 35 to 55, 66 to 86, and 99 to 119; these read MFNL…RHLT, WGTM…IAIL, LFVA…SLDF, and FGYA…GLWL. Positions 74 and 77 each coordinate Na(+).

It belongs to the fluoride channel Fluc/FEX (TC 1.A.43) family.

The protein resides in the cell inner membrane. The enzyme catalyses fluoride(in) = fluoride(out). With respect to regulation, na(+) is not transported, but it plays an essential structural role and its presence is essential for fluoride channel function. In terms of biological role, fluoride-specific ion channel. Important for reducing fluoride concentration in the cell, thus reducing its toxicity. This Mesorhizobium japonicum (strain LMG 29417 / CECT 9101 / MAFF 303099) (Mesorhizobium loti (strain MAFF 303099)) protein is Fluoride-specific ion channel FluC.